The sequence spans 224 residues: Glutathione S-transferase D7 (224 aa).

A GST N-terminal domain is found at 2–83 (PNLDLYNFPM…YLVEKYGKPD (82 aa)). Glutathione is bound by residues 53–55 (HTI) and 67–69 (ESR). The GST C-terminal domain maps to 90–210 (DPQKRALINQ…LESLQQGKKF (121 aa)).

The protein belongs to the GST superfamily. Delta family. As to quaternary structure, homodimer.

The catalysed reaction is RX + glutathione = an S-substituted glutathione + a halide anion + H(+). Conjugation of reduced glutathione to a wide number of exogenous and endogenous hydrophobic electrophiles. May be involved in detoxification. The polypeptide is Glutathione S-transferase D7 (Drosophila melanogaster (Fruit fly)).